Reading from the N-terminus, the 390-residue chain is Glucose-fructose oxidoreductase domain-containing protein 1 (390 aa).

The signal sequence occupies residues 1-21 (MLPGVGVFGTSLTARVIIPLL).

Belongs to the Gfo/Idh/MocA family. As to quaternary structure, homodimer. Interacts with NKIRAS2.

It is found in the secreted. In terms of biological role, probably catalytically inactive enzyme. Does not bind NAD or NADP. In Mus musculus (Mouse), this protein is Glucose-fructose oxidoreductase domain-containing protein 1 (Gfod1).